We begin with the raw amino-acid sequence, 227 residues long: Cytochrome c oxidase subunit 2 (227 aa).

Residues 1–14 (MAYPYELGFQDASS) lie on the Mitochondrial intermembrane side of the membrane. A helical transmembrane segment spans residues 15-45 (PIMEELLHFHDHTLMIVFLISTLVLYLITIM). Over 46–59 (LTTKLTHTSTMDAQ) the chain is Mitochondrial matrix. Residues 60–87 (EIETIWTILPAIILILIALPSLRILYMM) traverse the membrane as a helical segment. At 88 to 227 (DEINSPSLTV…DFEIWSSSML (140 aa)) the chain is on the mitochondrial intermembrane side. Positions 161, 196, 198, 200, 204, and 207 each coordinate Cu cation. Mg(2+) is bound at residue Glu198.

The protein belongs to the cytochrome c oxidase subunit 2 family. In terms of assembly, component of the cytochrome c oxidase (complex IV, CIV), a multisubunit enzyme composed of 14 subunits. The complex is composed of a catalytic core of 3 subunits MT-CO1, MT-CO2 and MT-CO3, encoded in the mitochondrial DNA, and 11 supernumerary subunits COX4I, COX5A, COX5B, COX6A, COX6B, COX6C, COX7A, COX7B, COX7C, COX8 and NDUFA4, which are encoded in the nuclear genome. The complex exists as a monomer or a dimer and forms supercomplexes (SCs) in the inner mitochondrial membrane with NADH-ubiquinone oxidoreductase (complex I, CI) and ubiquinol-cytochrome c oxidoreductase (cytochrome b-c1 complex, complex III, CIII), resulting in different assemblies (supercomplex SCI(1)III(2)IV(1) and megacomplex MCI(2)III(2)IV(2)). Found in a complex with TMEM177, COA6, COX18, COX20, SCO1 and SCO2. Interacts with TMEM177 in a COX20-dependent manner. Interacts with COX20. Interacts with COX16. It depends on Cu cation as a cofactor.

Its subcellular location is the mitochondrion inner membrane. It carries out the reaction 4 Fe(II)-[cytochrome c] + O2 + 8 H(+)(in) = 4 Fe(III)-[cytochrome c] + 2 H2O + 4 H(+)(out). In terms of biological role, component of the cytochrome c oxidase, the last enzyme in the mitochondrial electron transport chain which drives oxidative phosphorylation. The respiratory chain contains 3 multisubunit complexes succinate dehydrogenase (complex II, CII), ubiquinol-cytochrome c oxidoreductase (cytochrome b-c1 complex, complex III, CIII) and cytochrome c oxidase (complex IV, CIV), that cooperate to transfer electrons derived from NADH and succinate to molecular oxygen, creating an electrochemical gradient over the inner membrane that drives transmembrane transport and the ATP synthase. Cytochrome c oxidase is the component of the respiratory chain that catalyzes the reduction of oxygen to water. Electrons originating from reduced cytochrome c in the intermembrane space (IMS) are transferred via the dinuclear copper A center (CU(A)) of subunit 2 and heme A of subunit 1 to the active site in subunit 1, a binuclear center (BNC) formed by heme A3 and copper B (CU(B)). The BNC reduces molecular oxygen to 2 water molecules using 4 electrons from cytochrome c in the IMS and 4 protons from the mitochondrial matrix. The sequence is that of Cytochrome c oxidase subunit 2 (MT-CO2) from Cavia aperea (Brazilian guinea pig).